A 215-amino-acid chain; its full sequence is Pyrrolidone-carboxylate peptidase (215 aa).

Catalysis depends on residues Glu-80, Cys-143, and His-167.

It belongs to the peptidase C15 family. Homotetramer.

The protein localises to the cytoplasm. The catalysed reaction is Release of an N-terminal pyroglutamyl group from a polypeptide, the second amino acid generally not being Pro.. Removes 5-oxoproline from various penultimate amino acid residues except L-proline. This is Pyrrolidone-carboxylate peptidase from Pectobacterium atrosepticum (strain SCRI 1043 / ATCC BAA-672) (Erwinia carotovora subsp. atroseptica).